The primary structure comprises 58 residues: Small ribosomal subunit protein bS21 (58 aa).

The segment at 31–58 (DLKRIRHHETPVEKYKRKAQQRRRSRRR) is disordered. Basic residues predominate over residues 45–58 (YKRKAQQRRRSRRR).

Belongs to the bacterial ribosomal protein bS21 family.

The chain is Small ribosomal subunit protein bS21 from Prochlorococcus marinus (strain MIT 9303).